The primary structure comprises 516 residues: MREIITLQLGQRSNYLATHFWNVQESYFTYSENEASPVDHDISFRPGIGADGSETFTPRTIIYDLKGGFGSLRQYNALYEVEENVGMPKGLWDGNEVIQRQPNIPQSEYQKALELGLPLPRLTPETVRYWSDFNRLFYHPKSIVQLNEYEMNSQLMPFEDWTVGEAFFNSLDREHDLLDRDFRPFAEECDQLRGIQLFTGTDDAWGGFAARYIDRLRDEFGKKIIWTFALESGLKTEREKQFLRAKNSAKSISEISRQSTAYVPISMPPSKLPHYVNLNIASEWYISALTSVAVESVTLPGRLRWYEGIEPWFLDNAGPQRIFALRATIRSENSELPFASHLRPNDSTQMDTDEVDHDEIEQSEQRFDLGFSPIGSATRTNNTHIFSQVQVVRDSKCNSERPERAEVGQGLTSHRLSLMTGYVPSTLSNFRSTLEFPILDSFPSDLIHEQGPAGSTLRVDAALSATSGIGRDLKNLQQTIGRRIALEEREDLINGLHELSHAYQAGWENDSDSGDD.

It belongs to the misato family.

Its subcellular location is the mitochondrion. In terms of biological role, involved in the partitioning of the mitochondrial organelle and mitochondrial DNA (mtDNA) inheritance. The chain is Protein DML1 (DML1) from Coccidioides immitis (strain RS) (Valley fever fungus).